A 98-amino-acid chain; its full sequence is Large ribosomal subunit protein bL28 (98 aa).

Belongs to the bacterial ribosomal protein bL28 family.

The protein is Large ribosomal subunit protein bL28 of Thermus thermophilus (strain ATCC BAA-163 / DSM 7039 / HB27).